Reading from the N-terminus, the 261-residue chain is Pyridoxine-5'-phosphate oxidase (261 aa).

42–45 is a binding site for pyridoxal 5'-phosphate; sequence RGDP. 95–98 contacts FMN; the sequence is RMVL. Lys-100 serves as a coordination point for pyridoxal 5'-phosphate. Residues 110-111, 116-117, and Gln-139 each bind FMN; these read FT and RK. Pyridoxal 5'-phosphate is bound by residues Tyr-157, Arg-161, and Ser-165. FMN-binding positions include 174–175 and Trp-219; that span reads QS. Residue 225–227 participates in pyridoxal 5'-phosphate binding; that stretch reads RLH. Residue Arg-229 participates in FMN binding. Thr-238 is subject to Phosphothreonine. Ser-241 carries the post-translational modification Phosphoserine.

Belongs to the pyridoxamine 5'-phosphate oxidase family. As to quaternary structure, homodimer. It depends on FMN as a cofactor.

It catalyses the reaction pyridoxamine 5'-phosphate + O2 + H2O = pyridoxal 5'-phosphate + H2O2 + NH4(+). The catalysed reaction is pyridoxine 5'-phosphate + O2 = pyridoxal 5'-phosphate + H2O2. Its pathway is cofactor metabolism; pyridoxal 5'-phosphate salvage; pyridoxal 5'-phosphate from pyridoxamine 5'-phosphate: step 1/1. It participates in cofactor metabolism; pyridoxal 5'-phosphate salvage; pyridoxal 5'-phosphate from pyridoxine 5'-phosphate: step 1/1. Catalyzes the oxidation of either pyridoxine 5'-phosphate (PNP) or pyridoxamine 5'-phosphate (PMP) into pyridoxal 5'-phosphate (PLP). The sequence is that of Pyridoxine-5'-phosphate oxidase (PNPO) from Bos taurus (Bovine).